Reading from the N-terminus, the 442-residue chain is D-serine dehydratase (442 aa).

Lys118 bears the N6-(pyridoxal phosphate)lysine mark.

It belongs to the serine/threonine dehydratase family. DsdA subfamily. As to quaternary structure, monomer. Pyridoxal 5'-phosphate serves as cofactor.

It carries out the reaction D-serine = pyruvate + NH4(+). This Shigella sonnei (strain Ss046) protein is D-serine dehydratase.